The sequence spans 220 residues: NADH-quinone oxidoreductase subunit I (220 aa).

4Fe-4S ferredoxin-type domains follow at residues 71–102 (LQRL…IITH) and 112–141 (DSYT…MGNR). Residues C82, C85, C88, C92, C121, C124, C127, and C131 each contribute to the [4Fe-4S] cluster site. The disordered stretch occupies residues 187-220 (MQATPLDYVQEPSKEESKEETPTRSESHKGDENV). Residues 198–220 (PSKEESKEETPTRSESHKGDENV) are compositionally biased toward basic and acidic residues.

The protein belongs to the complex I 23 kDa subunit family. As to quaternary structure, NDH-1 is composed of 14 different subunits. Subunits NuoA, H, J, K, L, M, N constitute the membrane sector of the complex. It depends on [4Fe-4S] cluster as a cofactor.

It localises to the cell inner membrane. The enzyme catalyses a quinone + NADH + 5 H(+)(in) = a quinol + NAD(+) + 4 H(+)(out). Its function is as follows. NDH-1 shuttles electrons from NADH, via FMN and iron-sulfur (Fe-S) centers, to quinones in the respiratory chain. The immediate electron acceptor for the enzyme in this species is believed to be ubiquinone. Couples the redox reaction to proton translocation (for every two electrons transferred, four hydrogen ions are translocated across the cytoplasmic membrane), and thus conserves the redox energy in a proton gradient. In Helicobacter pylori (strain G27), this protein is NADH-quinone oxidoreductase subunit I.